The primary structure comprises 323 residues: Aldo-keto reductase family 1 member C18 (323 aa).

NADP(+)-binding positions include 20 to 24 (GFGTY) and Asp50. Tyr55 functions as the Proton donor in the catalytic mechanism. His117 is a substrate binding site. Residues 166 to 167 (SN), Gln190, 216 to 221 (YGALGT), and 270 to 280 (KSFNEERIREN) contribute to the NADP(+) site.

This sequence belongs to the aldo/keto reductase family. In terms of assembly, monomer.

Its subcellular location is the cytoplasm. It catalyses the reaction (17R,20S)-17,20-dihydroxypregn-4-en-3-one + NADP(+) = 17alpha-hydroxyprogesterone + NADPH + H(+). It carries out the reaction (17R,20S)-17,20-dihydroxypregn-4-en-3-one + NAD(+) = 17alpha-hydroxyprogesterone + NADH + H(+). Its function is as follows. Catalyzes the conversion of progesterone into 20-alpha-dihydroprogesterone (20 alpha-OHP). This chain is Aldo-keto reductase family 1 member C18 (Akr1c18), found in Mus musculus (Mouse).